The sequence spans 274 residues: 2,3,4,5-tetrahydropyridine-2,6-dicarboxylate N-succinyltransferase (274 aa).

Residues R103 and D140 each coordinate substrate.

This sequence belongs to the transferase hexapeptide repeat family. In terms of assembly, homotrimer.

The protein localises to the cytoplasm. It carries out the reaction (S)-2,3,4,5-tetrahydrodipicolinate + succinyl-CoA + H2O = (S)-2-succinylamino-6-oxoheptanedioate + CoA. Its pathway is amino-acid biosynthesis; L-lysine biosynthesis via DAP pathway; LL-2,6-diaminopimelate from (S)-tetrahydrodipicolinate (succinylase route): step 1/3. This chain is 2,3,4,5-tetrahydropyridine-2,6-dicarboxylate N-succinyltransferase, found in Pasteurella multocida (strain Pm70).